Reading from the N-terminus, the 1393-residue chain is DNA glycosylase/AP lyase ROS1 (1393 aa).

Disordered stretches follow at residues 1-25 (MEKQRREESSFQQPPWIPQTPMKPF), 98-186 (SLSS…TSTR), and 237-265 (LSAPSTPKRKRSQGKRKGVQPKKNGSNLE). The span at 98-108 (SLSSVSNNVAE) shows a compositional bias: low complexity. Basic residues predominate over residues 117-126 (PKRKKHRPKV). Composition is skewed to basic and acidic residues over residues 127–138 (RREAKPKREPKP) and 162–171 (KKVEVSKDQD). Basic residues predominate over residues 243-256 (PKRKRSQGKRKGVQ). The segment at 528 to 626 (KVDLDDETDR…AFMSLASQFP (99 aa)) is DEMETER. Residues 653–672 (EETMSSPPDHNHSSVTLKNT) show a composition bias toward polar residues. Disordered stretches follow at residues 653–722 (EETM…SVEV) and 789–830 (SNQV…CSQQ). Over residues 687–698 (SRSSSEIAISAH) the composition is skewed to low complexity. Residues 699–722 (ESVDKTTDSKEYVDSDRKGSSVEV) are compositionally biased toward basic and acidic residues. Residues 816 to 830 (KSSVDSSEPGCCSQQ) show a composition bias toward polar residues. Residue K901 forms a Glycyl lysine isopeptide (Lys-Gly) (interchain with G-Cter in ubiquitin) linkage. 4 residues coordinate [4Fe-4S] cluster: C1038, C1045, C1048, and C1054.

The protein belongs to the DNA glycosylase family. DEMETER subfamily. In terms of assembly, interacts (via the central region) with ZDP. Binds to RPA2A. Interacts with XRCC1. Interacts probably with a complex made of MBD7, IDM1, IDM2 and IDM3. Interacts with APE1L. [4Fe-4S] cluster is required as a cofactor. In terms of tissue distribution, expressed ubiquitously in both vegetative and reproductive organs.

It localises to the nucleus. Its subcellular location is the nucleolus. It carries out the reaction 2'-deoxyribonucleotide-(2'-deoxyribose 5'-phosphate)-2'-deoxyribonucleotide-DNA = a 3'-end 2'-deoxyribonucleotide-(2,3-dehydro-2,3-deoxyribose 5'-phosphate)-DNA + a 5'-end 5'-phospho-2'-deoxyribonucleoside-DNA + H(+). With respect to regulation, stimulated by ZDP. Stimulated by XRCC1. Functionally, bifunctional DNA glycosylase/lyase, which excises 5-methylcytosine (5-meC) and 5-hydroxymethylcytosine (5-hmeC), leaving an apyrimidinic (AP) site that is subsequently incised by the lyase activity. Generates 3'-phosphor-alpha,beta-unsaturated aldehyde (3'-PUA) as a primary 5-meC excision intermediate. Prevents DNA hypermethylation, specifically in the promoter of otherwise silenced loci. May be involved in DNA repair through its nicking activity on methylated DNA. Binds with similar affinity to both methylated and non-methylated DNA. Highly distributive behavior on DNA substrates containing multiple 5-meC residues. Involved with Pol IV in the remodeling of the 5S rDNA chromatin via DNA methylation modifications during the first days of development post-germination. Participates in UV-B induced- and oxidative DNA damage repair. The sequence is that of DNA glycosylase/AP lyase ROS1 from Arabidopsis thaliana (Mouse-ear cress).